A 393-amino-acid polypeptide reads, in one-letter code: Formate-dependent phosphoribosylglycinamide formyltransferase (393 aa).

Residues 22-23 and Glu82 contribute to the N(1)-(5-phospho-beta-D-ribosyl)glycinamide site; that span reads EL. ATP contacts are provided by residues Arg114, Lys155, 160–165, 195–198, and Glu203; these read SSGKGQ and EGFI. Positions 119-308 constitute an ATP-grasp domain; that stretch reads RLAAEELDLP…QFALHARAIL (190 aa). Residues Glu267 and Glu279 each contribute to the Mg(2+) site. N(1)-(5-phospho-beta-D-ribosyl)glycinamide-binding positions include Asp286, Lys356, and 363 to 364; that span reads RR.

It belongs to the PurK/PurT family. Homodimer.

The enzyme catalyses N(1)-(5-phospho-beta-D-ribosyl)glycinamide + formate + ATP = N(2)-formyl-N(1)-(5-phospho-beta-D-ribosyl)glycinamide + ADP + phosphate + H(+). It participates in purine metabolism; IMP biosynthesis via de novo pathway; N(2)-formyl-N(1)-(5-phospho-D-ribosyl)glycinamide from N(1)-(5-phospho-D-ribosyl)glycinamide (formate route): step 1/1. Functionally, involved in the de novo purine biosynthesis. Catalyzes the transfer of formate to 5-phospho-ribosyl-glycinamide (GAR), producing 5-phospho-ribosyl-N-formylglycinamide (FGAR). Formate is provided by PurU via hydrolysis of 10-formyl-tetrahydrofolate. The chain is Formate-dependent phosphoribosylglycinamide formyltransferase from Pseudomonas entomophila (strain L48).